The chain runs to 213 residues: MKKVLITAFEPFDGERINPSWEAVSRLHNRLIGGAEIVAKRLPCAFGTSLEVLYATIDAVKPDLVIAVGQAGGRADMSIERVAINVDDARIPDNAGAQPIDEPVLSGGPAALFSTLPIKALVAGIREAGIPASVSQTAGTFVCNHVMYGLLHYLRRRKARGGFIHIPYLPEQAINHPGAPSMALATVILALEMAVSISLAVEEDMRLAGGATH.

Catalysis depends on residues glutamate 80, cysteine 143, and histidine 165.

This sequence belongs to the peptidase C15 family. In terms of assembly, homotetramer.

The protein resides in the cytoplasm. It catalyses the reaction Release of an N-terminal pyroglutamyl group from a polypeptide, the second amino acid generally not being Pro.. Removes 5-oxoproline from various penultimate amino acid residues except L-proline. The chain is Pyrrolidone-carboxylate peptidase from Erwinia tasmaniensis (strain DSM 17950 / CFBP 7177 / CIP 109463 / NCPPB 4357 / Et1/99).